Here is a 123-residue protein sequence, read N- to C-terminus: Protein HesB, vegetative (123 aa).

It belongs to the HesB/IscA family.

Functionally, may be required for efficient nitrogen fixation. This chain is Protein HesB, vegetative (hesB2), found in Trichormus variabilis (strain ATCC 29413 / PCC 7937) (Anabaena variabilis).